Reading from the N-terminus, the 198-residue chain is Probable GTP-binding protein EngB (198 aa).

The EngB-type G domain maps to 22 to 195; that stretch reads NRNEVAFVGR…IDKLFLEFAT (174 aa). GTP is bound by residues 30-37, 57-61, 75-78, 142-145, and 174-176; these read GRSNVGKS, GKTRL, DLPG, TKSD, and YSS. Residues Ser-37 and Thr-59 each coordinate Mg(2+).

Belongs to the TRAFAC class TrmE-Era-EngA-EngB-Septin-like GTPase superfamily. EngB GTPase family. Mg(2+) serves as cofactor.

In terms of biological role, necessary for normal cell division and for the maintenance of normal septation. The protein is Probable GTP-binding protein EngB of Clostridium botulinum (strain Alaska E43 / Type E3).